Consider the following 1080-residue polypeptide: AP-4 complex subunit epsilon (1080 aa).

HEAT repeat units follow at residues 161–198 (DTIP…LVGD), 201–238 (LDDD…KHST), 369–405 (QLIE…KVSP), 406–443 (KLVL…QTNV), and 445–479 (PVCS…KYSP). Disordered regions lie at residues 711–782 (TPLV…FPQQ), 801–920 (NNNS…NIDP), 933–973 (FSEN…INNN), and 996–1027 (TNNS…NNNL). Low complexity-rich tracts occupy residues 762 to 782 (QQQQ…FPQQ), 801 to 847 (NNNS…PNNQ), 878 to 911 (NKQT…IQKH), 936 to 952 (NNNR…NQNN), and 962 to 972 (KKSNNENNINN).

Belongs to the adaptor complexes large subunit family. In terms of assembly, may be part of the adaptor protein complex 4 (AP-4), a heterotetramer composed of two large adaptins (epsilon-type subunitand beta-type subunit), a medium adaptin (mu-type subunit) and a small adaptin (sigma-type).

Its subcellular location is the golgi apparatus. It is found in the trans-Golgi network membrane. In terms of biological role, probable component of an adaptor protein complex. Adaptor protein complexes are vesicle coat components involved both in vesicle formation and cargo selection. They control the vesicular transport of proteins in different trafficking pathways. The chain is AP-4 complex subunit epsilon from Dictyostelium discoideum (Social amoeba).